A 55-amino-acid polypeptide reads, in one-letter code: ATP synthase F(0) complex subunit 8 (55 aa).

A helical membrane pass occupies residues 10–32 (FFIMLASWLTFSLIIQPKLLTFV).

This sequence belongs to the ATPase protein 8 family. As to quaternary structure, component of the ATP synthase complex composed at least of ATP5F1A/subunit alpha, ATP5F1B/subunit beta, ATP5MC1/subunit c (homooctomer), MT-ATP6/subunit a, MT-ATP8/subunit 8, ATP5ME/subunit e, ATP5MF/subunit f, ATP5MG/subunit g, ATP5MK/subunit k, ATP5MJ/subunit j, ATP5F1C/subunit gamma, ATP5F1D/subunit delta, ATP5F1E/subunit epsilon, ATP5PF/subunit F6, ATP5PB/subunit b, ATP5PD/subunit d, ATP5PO/subunit OSCP. ATP synthase complex consists of a soluble F(1) head domain (subunits alpha(3) and beta(3)) - the catalytic core - and a membrane F(0) domain - the membrane proton channel (subunits c, a, 8, e, f, g, k and j). These two domains are linked by a central stalk (subunits gamma, delta, and epsilon) rotating inside the F1 region and a stationary peripheral stalk (subunits F6, b, d, and OSCP).

Its subcellular location is the mitochondrion membrane. Its function is as follows. Subunit 8, of the mitochondrial membrane ATP synthase complex (F(1)F(0) ATP synthase or Complex V) that produces ATP from ADP in the presence of a proton gradient across the membrane which is generated by electron transport complexes of the respiratory chain. ATP synthase complex consist of a soluble F(1) head domain - the catalytic core - and a membrane F(1) domain - the membrane proton channel. These two domains are linked by a central stalk rotating inside the F(1) region and a stationary peripheral stalk. During catalysis, ATP synthesis in the catalytic domain of F(1) is coupled via a rotary mechanism of the central stalk subunits to proton translocation. In vivo, can only synthesize ATP although its ATP hydrolase activity can be activated artificially in vitro. Part of the complex F(0) domain. This is ATP synthase F(0) complex subunit 8 from Loxigilla noctis (Lesser Antillean bullfinch).